The following is a 434-amino-acid chain: Transcriptional enhancer factor TEF-3 (434 aa).

The span at 1-28 (MEGTAGTITSNEWSSPTSPEGSTASGGS) shows a compositional bias: polar residues. 2 disordered regions span residues 1–42 (MEGT…AEGV) and 188–215 (QPPL…PPWQ). Positions 36 to 112 (DNDAEGVWSP…QVLARRKARE (77 aa)) form a DNA-binding region, TEA. The segment covering 201-213 (GPAPSPSAPPAPP) has biased composition (pro residues).

Interacts with YAP1 and WWTR1/TAZ. Preferentially expressed in skeletal muscle. Lower levels in pancreas, placenta, and heart.

The protein localises to the nucleus. Functionally, transcription factor which plays a key role in the Hippo signaling pathway, a pathway involved in organ size control and tumor suppression by restricting proliferation and promoting apoptosis. The core of this pathway is composed of a kinase cascade wherein MST1/MST2, in complex with its regulatory protein SAV1, phosphorylates and activates LATS1/2 in complex with its regulatory protein MOB1, which in turn phosphorylates and inactivates YAP1 oncoprotein and WWTR1/TAZ. Acts by mediating gene expression of YAP1 and WWTR1/TAZ, thereby regulating cell proliferation, migration and epithelial mesenchymal transition (EMT) induction. Binds specifically and non-cooperatively to the Sph and GT-IIC 'enhansons' (5'-GTGGAATGT-3') and activates transcription. Binds to the M-CAT motif. The polypeptide is Transcriptional enhancer factor TEF-3 (TEAD4) (Homo sapiens (Human)).